The chain runs to 146 residues: 3-dehydroquinate dehydratase (146 aa).

Tyr-23 acts as the Proton acceptor in catalysis. Residues Asn-74, His-80, and Asp-87 each contribute to the substrate site. His-100 acts as the Proton donor in catalysis. Residues 101-102 (IS) and Arg-111 contribute to the substrate site.

This sequence belongs to the type-II 3-dehydroquinase family. In terms of assembly, homododecamer.

It carries out the reaction 3-dehydroquinate = 3-dehydroshikimate + H2O. It functions in the pathway metabolic intermediate biosynthesis; chorismate biosynthesis; chorismate from D-erythrose 4-phosphate and phosphoenolpyruvate: step 3/7. In terms of biological role, catalyzes a trans-dehydration via an enolate intermediate. The polypeptide is 3-dehydroquinate dehydratase (Bacillus cereus (strain AH820)).